The following is a 503-amino-acid chain: Cytochrome P450 3A43 (503 aa).

C442 is a heme binding site.

Belongs to the cytochrome P450 family. It depends on heme as a cofactor. Highest expression level in prostate. Also expressed in liver, kidney, pancreas, fetal liver and fetal skeletal muscle.

It is found in the endoplasmic reticulum membrane. The protein localises to the microsome membrane. It carries out the reaction an organic molecule + reduced [NADPH--hemoprotein reductase] + O2 = an alcohol + oxidized [NADPH--hemoprotein reductase] + H2O + H(+). Functionally, exhibits low testosterone 6-beta-hydroxylase activity. The protein is Cytochrome P450 3A43 (CYP3A43) of Homo sapiens (Human).